Here is a 4561-residue protein sequence, read N- to C-terminus: MANVQVAVRVRPLSKRETKEGGRIIVEVDDKVAKIRNVKVDSRPESFGDTREKVVAFGFDYCYWSVNPEDPHYASQEVVFRDLGTEVLSGAAKGYNICLFAYGQTGSGKTYTMLGTPASVGLTPRICEGLFIREDDCASQPCSRSIKVSFLEIYNERVRDLLKQSNQNKSYTLRVREHPEMGPYVQGLSQHVVTNYQQVIQLLEAGIANRITAATHVHEASSRSHAIFTIHCTQAILQNNLPSETASKINLVDLAGSERADPSYCKDRITEGANINKSLVTLGIVISTLAQNSQVFSSCQSLSSAASSGGDSGVPSTTSGASSGGGPARRQSYIPYRDSVLTWLLKESLGGNSKTIMVATVSPAHTSYSETMSTMRYASNAKNIINKPRVNEDANVKLIRELREEIERLKAVLLNFELIDTLTQHWTEKRNDRQALMEHYGVDINRKRARVVIDSSLPHLMALEDDVLSTGVVLYHLKEGTTKIGRIDSDQEQDIVLQGQWIERDHCTITSTCGVVILRPTQGARCTVNGREVTASCRLTQGAVITLGKAQKFRFNHPAEAAVLRHQRLKVGEALGSSGSLEWLDLDGDVSASRLGLCPVLRKERRVLEEQCDRDQQPSRHSEIPYRAQPEQQQCHVEALKQQAKEGQSRVQKELELDHTHISQQIKDNQQWLLTEETWLASLRETQQEGNCGEEKELEASVAPDAWLPTVPQTPPSPLVQSQKRVVQPQCSPRHTTRATVWNIRQKKVSFQLERIIKKRRLLEAQRRLEQLSTFFWIQDDGASRAPSWASSSNTSGPGSQRRSRWTTCSSLSLQRLGCRRLPQLHSDFMNWDPSAMSPPVPELTHQMPEKTLSTDCIPPKAGRLGRNSFHSSRWRKFSPARRASTQGTHLTVSHKSVSSQEIESLGKQPCQMSSQGQSTKKQKARDGSRTFIPAAQTRWASVNTKTGWQKEGTCGTYKDPKETTSQSTDLSGLEPAAGHRKVVKTFQAESKPSPSSRASKKHQRVLAARARDIVKTFSRLPHGGPLKNQPRAGDPGTPASFTDSRPIKDPVREEDRDLSDTESSYSVDSLSYIYAKVPKKLLKPEDLQGKWNLPDSENSESDNSQISEDSLAGKGHKSLPENSRGEYSMKDHGHSRARTSASVRGLPMPSDSSLCTQKYRSFSLDSLIDPENRQGEPFLGSADEMPTETFWHLQNATPSSVDQEAMDRPSPTNHRMGVGVNVLLPKSNSFYLDPQFQPPCEQLESEMEASYSEHTNPLRGLQLARESPLLSVDSWFSCDSKVSPSSPSGDIHSLCPSPDIHEIQPHDEKPKHWLSIEEPKPPGTCKLPQSSTEPPCSSDLYATSASDTSKPSVCESQGLLQPGDGGFFQGREMPDMTNQGISEESHNSDMSSVLAPSATSFTQVCSVNKDWAALHQEYLLELSDSGFEAVGEPRPAFPFLEEDSSSLAEASDKVDTQLPTGPGLPRNLDFSSFPVHISKIGHLRAEKDHDSLSAKVESASDLLSTVERMSSNGTYPADIESLTSGSINAQPYTAGNVIPSSMTEAWEVHRASLEGCLQGDRHSVLITSSGQKRAYHNDDTLATEGDCLPQDGALLGKNTKVQPGLLSHNSYQQPLLEEKAASQQCTDGEVAGTRIDACCAFPSGPELFLHSTPWSSSPSSLQPPPLETFYVTKSRDALTETALEIPACREAWVPSPPPREAWGFDHSHQVSQKAHWKNNLPKLSQSQNSKIDSPQQTTTKRPTDLDTGEGTEELGKHSRNMREEENHDSAYSFVAQNRQHLPSTRLKVCECGNQLGILNKEYSLSVHQDEEGASAWHHGSVAFNGSEPKTLLFICDSKASGEEQSLLLPQIQSCGMHSQSPGARSDFIGKIANLDPEKVIPEEAAVSLKSRSLHCLSSPVIVAGGRSPTRRREGRNETGLLREVISKDIQEEFSLPGTQYICERCHLLLCSRERKPTECKAHGQSQEVQSKEEPLEEKQNKRVNNIDEMARLMRSVMQLETGILEIESKHNKHLHASHMPSTELMLQDLEDQEKADHVPTPESSGEHLCFEDQPSFPIQIKDDIFEDSKAREIEVTNATSNNNTQIQKLTGSPFRSREYVQTRESESEHSYPPPGADRLARDTCDSLGKGTALRKPSNISLHSRTMRGLARALPLQPSIERPKKDNELLKASAKFQGQTWALESLEELESMERFQESQIVVVPSGSELEDAKTQGGVEEMTVDRRGSLQEKEDMVSSTQKVPTPSQHWKGTFFSQEAVSPFYYQTGFSAALPHGELSGTQPVHSLSFPRSGLHGSDTKGVSSFEYILEPVMLKTNRNSLATGVGDQDHSGETRSSSPQERASGDVSTTHTPLGGSVMPVVVRASGQAVTSDSTLLNTEDWITVSTSSQEDQEGDFRDTSTGSTTQEALGSEAEATVQKERKNSSLDRISRQAEKRVSFLLQEDSNQGEEERQKAEETSEDQQLPNSAYLTPISELKGPDAEPLLLPDSSINASICLGILAEIRQAKTQRKQLTDLVAEGTVLPYETLQEAEWFSEAAGKPQTQKVKLGWGSTRNDAKAQRLHEASPSAVSADLLADERKAQVSAGSFHHLPNPETDRGPQHHLLASPHIVSELEKRYCTGKPRQFCGASGRSDSSEVIEKRKEASRTKSSVDPLPSDRLLSIPAVEQDGGLGSEKVSVLPSQTSYAPGRILHGQGQLTARETVKGLSFGGKDSILGHQEPRSLDSTHGGGSEKISVTTQKENAVFSECPSVICTVDNAVDLSQSKQDHVQGLDASTGLEETKASPKSGAVHPEAPGNVGAEANIRHPVKWKNVDSGLACGGDSKNPWSTPFLDQRPSLHPSGVREEAPGPCPKECLVFERNTGGSRPLGSSYEEAENRTIPCPHLSGSQPTTAVHACCSHSSTLLCCRDGVLRKGTPWAAAPPDHSLCIVPSTVCEVDGTGECLSRVSLAHDLKHKCGPVDNSIPNPPTTTPVSSPAQNCSCLSTSEMRARCLTHTFARGRSVEGSGEETTGKKVTTAPEDTFPSSPAGMSSEPLRTLKNNSVDENGQASQTMPEPPAVTQGPGTLNSNECVDSKLVIAAQFGHLENTKCCSEKMQPSTKVRGHSCLAPQARFVDMLKPTCHPKIETSWEEEEQQRDQVSGDGKDHAQVRNLVPSNVGGFDGYQTRDGETKSSVPQTFFSDFEAQTEPSQPAAQTHSQHCSDREQLPRSHRHLLPVIAIFSGPKHARYSPRPQFTVVSSSRSLQELNLSVEPPSPTDEDAQRPDSSWRPHLRGYSSEKPISTSLKTQDCSQKALCNLNNSSSNHRPLNPVIPPYPTSSTVSCMPTPEFMTTWMPGALEQAHQGKTDKLSVQGMPENWHSQTDEEMLHFGSSELSPSVLSSCPQGLVHIGWKQYVFGSAVDVSCSQKPQCLIQSNMAQCSSIDNVLEDKKSPFHSHPKTDAQTQDLPNIHSDVENDQSSNELPLVGGSATAQVDEILLLCPPEMGCAGGEASVNTFEQGTQALGSRRHWCCTDVSLQPEARTMSDSELASWTSMHNLSVHLSQLLHSTSELLGSLSHPGVVIKEQNVKRDSLDEAQQALRMDGSASTTVDEGIQTDLALPPLAFQGPEVKSEEVSVILDMMDSGITTVAQEKGDVPVVFQKREAEGAAETPGLHEESTHNKLQSPPLPSPHLRVQKADLGQNFTFMSPPASPDGSPPPSLRPEESCMVVNMPRFSPHSGLSLGAFESTQEPRTQKRLCGSRAVLVDRASSPILTFSASIQELSNPLACVTLSAPSVHPLEDFQKLDDINSDLAVGDPRPPVDNSQATDESGDSQRAESLDREGKSPLGKSSERLLLDNSSSCSPQQSSSLQVSFLGIAPQQLQPKTTTGDQSKLPSPPPRHKNPKLDDSCVSEKVTSVEHGPLRPSQWQGRTTNKDWGSEFMVEPQPNLDQPSSRRGLQPLSPCQISDTTGLQSPAVDPPQACHPVGLLCSGSHMHVAPGPQHYNLRDLPVHNNFNNLYGVQGGPGRGLHEGESLGVRCDSSSVGTHRPPQLSDKYSQNLEWLRLEHIPLQAGVQKLALSVELTEAKLHHGFGETDALLKVLQSGTGEVLAPQEPAVPSSEEFYTRQKKTIETLRRQRAERLHNFRRTRSLSPQKQLGLLPSKDLPTWELDLPSRRQEYLQQLRKHIVDTTRIPEPAPGLARPPSDIELMLQEYRRAREEAKVEIAQARDRLKERTEQEKMRIRQQIISQLLKEEEKLQTLANFSSLYTSSNGSISSGVTSGYNSSPAFSGHLQSLEVSGDSQVPDSQDTWIGDWQDQSTVRNSYLYLTGSSWKSLAHSRRASMGSGCCSASSLSSLGACFSFPYQDLAKHIVSTSMADVMAACSDNLHNLFIRQATDGWNYQGEEQEVQLYYKEFSSTRHGFLGASVVSQPLSQVWAAVSDPTLWPLYHKPIQTARLHQRVTNSISLVYLVCNTTLCELKQLRDFCCVCVEAKEGCLSIMAAQSVYDASMPRPSRKMVRGEILPSAWVLQPVIIEGKEITRVISLVQVELGAPGFPPHLLNSCIKQQPLVVAKLASFLRS.

The 382-residue stretch at N3–I384 folds into the Kinesin motor domain. Residue G103 to T110 coordinates ATP. Residues S307 to A321 are compositionally biased toward low complexity. The disordered stretch occupies residues S307–R330. One can recognise an FHA domain in the interval T482–V533. 3 disordered regions span residues S784–R805, S873–S1064, and W1092–S1153. 4 stretches are compositionally biased toward polar residues: residues W789 to R805, A884 to I903, C911 to T920, and R939 to G948. 2 stretches are compositionally biased toward basic and acidic residues: residues R1046 to S1060 and S1124 to H1135. S1164 is modified (phosphoserine). 16 disordered regions span residues P1288–S1392, R1700–N1767, E1959–Q1980, T2077–L2120, L2320–S2356, V2384–D2427, F2439–S2467, K2622–P2656, K2712–I2735, T2777–G2800, R3002–L3067, A3185–L3207, E3246–K3286, E3645–E3703, S3790–S3847, and Q3863–T3913. The segment covering D1300–K1321 has biased composition (basic and acidic residues). 2 stretches are compositionally biased toward polar residues: residues L1328 to L1360 and P1722 to K1741. Basic and acidic residues-rich tracts occupy residues E1754–N1767 and Q1970–Q1980. Polar residues predominate over residues T2077–T2091. Basic and acidic residues predominate over residues R2096–H2110. Polar residues-rich tracts occupy residues T2333–T2351 and T2399–A2408. Residues E2414–Q2463 are a coiled coil. Over residues V2417 to D2427 the composition is skewed to basic and acidic residues. A compositionally biased stretch (basic and acidic residues) spans D2634–R2647. 2 stretches are compositionally biased toward polar residues: residues L3039–M3054 and T3187–Q3199. Residues P3689–L3700 are compositionally biased toward pro residues. The span at D3812–L3835 shows a compositional bias: basic and acidic residues. Residues Q3863 to L3874 show a composition bias toward polar residues. Positions S4185–R4224 form a coiled coil. Positions P4344–S4561 constitute an START domain.

Belongs to the TRAFAC class myosin-kinesin ATPase superfamily. Kinesin family. In terms of assembly, interacts with ATAD3A.

It localises to the cytoplasm. Its subcellular location is the cytoskeleton. The protein localises to the microtubule organizing center. The protein resides in the centrosome. It is found in the centriole. It localises to the nucleus. Microtubule-dependent motor protein required for spindle pole assembly during mitosis. Required to stabilize the pericentriolar material (PCM). The polypeptide is StAR-related lipid transfer protein 9 (Stard9) (Mus musculus (Mouse)).